A 79-amino-acid chain; its full sequence is Exodeoxyribonuclease 7 small subunit (79 aa).

Belongs to the XseB family. Heterooligomer composed of large and small subunits.

Its subcellular location is the cytoplasm. The catalysed reaction is Exonucleolytic cleavage in either 5'- to 3'- or 3'- to 5'-direction to yield nucleoside 5'-phosphates.. Functionally, bidirectionally degrades single-stranded DNA into large acid-insoluble oligonucleotides, which are then degraded further into small acid-soluble oligonucleotides. In Lactococcus lactis subsp. cremoris (strain MG1363), this protein is Exodeoxyribonuclease 7 small subunit.